The chain runs to 1019 residues: Mediator of replication checkpoint protein 1 (1019 aa).

6 disordered regions span residues 1-33, 105-143, 166-202, 261-290, 443-683, and 965-1019; these read MASL…LDTP, QGGK…DRNS, NSAT…SDRK, EEEA…IVNS, IQGE…SKTF, and TQRP…SDFD. Positions 17–30 are enriched in acidic residues; sequence SDEASINDDQEDIL. A compositionally biased stretch (acidic residues) spans 177-191; it reads LDSESADDSDLADES. 3 stretches are compositionally biased toward basic and acidic residues: residues 192–202, 271–281, and 454–468; these read ELSKKYTSDRK, NVEKEEPKPSV, and LERA…RQLE. The span at 476-486 shows a compositional bias: acidic residues; it reads DEGELNDEEEV. Over residues 487–503 the composition is skewed to polar residues; that stretch reads ISSSNTPSTKAKTTNKV. A compositionally biased stretch (basic and acidic residues) spans 556–580; sequence MIRDSFDRLSSESIKDSQKTEELHD. Composition is skewed to polar residues over residues 590-607 and 630-658; these read QSTS…SQLT and NTSS…IDSV. Ser604 carries the post-translational modification Phosphoserine. A Phosphothreonine modification is found at Thr645. Residues 671-681 are compositionally biased toward basic and acidic residues; it reads EERRESRRDSK.

Interacts with cds1. Phosphorylated by rad3 and tel1.

Its subcellular location is the nucleus. Functionally, component of the replisome and is required for rad3-dependent activation of the checkpoint kinase cds1 in response to replication fork arrest. Phosphorylation allows it to mediate the activation of cds1. In Schizosaccharomyces pombe (strain 972 / ATCC 24843) (Fission yeast), this protein is Mediator of replication checkpoint protein 1 (mrc1).